The sequence spans 158 residues: Protein SREK1IP1 (158 aa).

Disordered stretches follow at residues 1-20 (MAAP…RCGY) and 45-158 (SSTS…SDTD). The segment at 13 to 30 (AGCKRCGYPGHLTFECRN) adopts a CCHC-type zinc-finger fold. Residues 59–79 (ALSKEKIFGSHSKGSQEDSRK) are compositionally biased toward basic and acidic residues. Composition is skewed to basic residues over residues 80-98 (EKHK…KKRS) and 111-140 (KKKK…KQKK). Residues 145–158 (SSSSDSSSESSDTD) are compositionally biased toward low complexity.

Possible splicing regulator involved in the control of cellular survival. This Danio rerio (Zebrafish) protein is Protein SREK1IP1 (srek1ip1).